The primary structure comprises 134 residues: Large ribosomal subunit protein eL27 (134 aa).

The KOW domain maps to 5-40 (LKSGKVVVVLSGRFAGKKAVIVRNFDDGTSSRPYGH).

Belongs to the eukaryotic ribosomal protein eL27 family.

The protein is Large ribosomal subunit protein eL27 (RPL27) of Pyrobotrys stellatus (Green alga).